The chain runs to 227 residues: Small ribosomal subunit protein uS3 (227 aa).

A KH type-2 domain is found at 38–106 (LRKFIKDRFY…NVNINIQEIR (69 aa)).

It belongs to the universal ribosomal protein uS3 family. As to quaternary structure, part of the 30S ribosomal subunit. Forms a tight complex with proteins S10 and S14.

Its function is as follows. Binds the lower part of the 30S subunit head. Binds mRNA in the 70S ribosome, positioning it for translation. This is Small ribosomal subunit protein uS3 from Syntrophomonas wolfei subsp. wolfei (strain DSM 2245B / Goettingen).